Here is a 176-residue protein sequence, read N- to C-terminus: Dynein light chain Tctex-type 5-B (176 aa).

Belongs to the dynein light chain Tctex-type family.

The polypeptide is Dynein light chain Tctex-type 5-B (Dynlt5-b) (Xenopus laevis (African clawed frog)).